The chain runs to 110 residues: NADH-quinone oxidoreductase subunit K (110 aa).

3 consecutive transmembrane segments (helical) span residues 14–34, 39–59, and 70–90; these read VSQY…GMMV, ITIL…FVGI, and IFAL…LGII.

This sequence belongs to the complex I subunit 4L family. In terms of assembly, NDH-1 is composed of 14 different subunits. Subunits NuoA, H, J, K, L, M, N constitute the membrane sector of the complex.

The protein resides in the cell inner membrane. It catalyses the reaction a quinone + NADH + 5 H(+)(in) = a quinol + NAD(+) + 4 H(+)(out). In terms of biological role, NDH-1 shuttles electrons from NADH, via FMN and iron-sulfur (Fe-S) centers, to quinones in the respiratory chain. The immediate electron acceptor for the enzyme in this species is believed to be ubiquinone. Couples the redox reaction to proton translocation (for every two electrons transferred, four hydrogen ions are translocated across the cytoplasmic membrane), and thus conserves the redox energy in a proton gradient. This Hydrogenobaculum sp. (strain Y04AAS1) protein is NADH-quinone oxidoreductase subunit K.